The following is a 178-amino-acid chain: Peptide deformylase (178 aa).

Cysteine 102 and histidine 144 together coordinate Fe cation. Glutamate 145 is an active-site residue. Histidine 148 serves as a coordination point for Fe cation.

This sequence belongs to the polypeptide deformylase family. It depends on Fe(2+) as a cofactor.

The catalysed reaction is N-terminal N-formyl-L-methionyl-[peptide] + H2O = N-terminal L-methionyl-[peptide] + formate. In terms of biological role, removes the formyl group from the N-terminal Met of newly synthesized proteins. Requires at least a dipeptide for an efficient rate of reaction. N-terminal L-methionine is a prerequisite for activity but the enzyme has broad specificity at other positions. The protein is Peptide deformylase of Leptospira borgpetersenii serovar Hardjo-bovis (strain JB197).